Here is a 177-residue protein sequence, read N- to C-terminus: PRELI domain-containing protein 2 (177 aa).

The 175-residue stretch at 1–175 (MGVTVDVHQV…LLKEQCGSPL (175 aa)) folds into the PRELI/MSF1 domain.

This chain is PRELI domain-containing protein 2 (Prelid2), found in Mus musculus (Mouse).